A 454-amino-acid polypeptide reads, in one-letter code: Putative KilA-N domain-containing protein L4 (454 aa).

Basic residues predominate over residues 1 to 12; that stretch reads MPQKTSKSKSSR. Residues 1 to 159 form a disordered region; it reads MPQKTSKSKS…DVPEEEYDDN (159 aa). Residues 14 to 64 are compositionally biased toward basic and acidic residues; sequence RYIEDSDDETRGRSRNRSIEKSRSRSLDKSQKKSRDKSLTRSRSKSPEKSK. The segment covering 65–79 has biased composition (basic residues); the sequence is SRSKSLTRSRSKSPK. Composition is skewed to acidic residues over residues 98 to 123 and 130 to 158; these read YTTE…DEEL and ESDE…EYDD. Residues 172 to 276 enclose the KilA-N domain; it reads EFARGKFGDF…LKVSDIVIEY (105 aa).

The chain is Putative KilA-N domain-containing protein L4 from Acanthamoeba polyphaga mimivirus (APMV).